The following is a 27-amino-acid chain: Pyruvate dehydrogenase protein X component, mitochondrial (27 aa).

The disordered stretch occupies residues 1–27 (FRLSPAARNILEKHSLDASQGTATGPR). The 26-residue stretch at 2-27 (RLSPAARNILEKHSLDASQGTATGPR) folds into the Peripheral subunit-binding (PSBD) domain. Lys-13 bears the N6-acetyllysine mark. Ser-15 bears the Phosphoserine mark. The segment covering 17–27 (DASQGTATGPR) has biased composition (polar residues).

It belongs to the 2-oxoacid dehydrogenase family. As to quaternary structure, part of the inner core of the multimeric pyruvate dehydrogenase complex that is composed of about 48 DLAT and 12 PDHX molecules. This core binds multiple copies of pyruvate dehydrogenase (subunits PDH1A and PDHB, E1), dihydrolipoamide acetyltransferase (DLAT, E2) and lipoamide dehydrogenase (DLD, E3). Interacts with SIRT4. Interacts with DLD.

The protein resides in the mitochondrion matrix. Required for anchoring dihydrolipoamide dehydrogenase (E3) to the dihydrolipoamide transacetylase (E2) core of the pyruvate dehydrogenase complexes of eukaryotes. This specific binding is essential for a functional PDH complex. This is Pyruvate dehydrogenase protein X component, mitochondrial from Mesocricetus auratus (Golden hamster).